Here is a 305-residue protein sequence, read N- to C-terminus: UDP-3-O-acyl-N-acetylglucosamine deacetylase (305 aa).

The Zn(2+) site is built by His79, His238, and Asp242. Catalysis depends on His265, which acts as the Proton donor.

It belongs to the LpxC family. Zn(2+) is required as a cofactor.

The catalysed reaction is a UDP-3-O-[(3R)-3-hydroxyacyl]-N-acetyl-alpha-D-glucosamine + H2O = a UDP-3-O-[(3R)-3-hydroxyacyl]-alpha-D-glucosamine + acetate. It functions in the pathway glycolipid biosynthesis; lipid IV(A) biosynthesis; lipid IV(A) from (3R)-3-hydroxytetradecanoyl-[acyl-carrier-protein] and UDP-N-acetyl-alpha-D-glucosamine: step 2/6. Catalyzes the hydrolysis of UDP-3-O-myristoyl-N-acetylglucosamine to form UDP-3-O-myristoylglucosamine and acetate, the committed step in lipid A biosynthesis. This chain is UDP-3-O-acyl-N-acetylglucosamine deacetylase, found in Cronobacter sakazakii (strain ATCC BAA-894) (Enterobacter sakazakii).